The primary structure comprises 477 residues: Glutamate--tRNA ligase (477 aa).

Positions 12–22 match the 'HIGH' region motif; sequence PSPTGMFHVGG. Zn(2+) contacts are provided by C106, C108, C128, and D130. A 'KMSKS' region motif is present at residues 238 to 242; that stretch reads KLSKR. K241 is an ATP binding site.

The protein belongs to the class-I aminoacyl-tRNA synthetase family. Glutamate--tRNA ligase type 1 subfamily. As to quaternary structure, monomer. The cofactor is Zn(2+).

It localises to the cytoplasm. It carries out the reaction tRNA(Glu) + L-glutamate + ATP = L-glutamyl-tRNA(Glu) + AMP + diphosphate. Its function is as follows. Catalyzes the attachment of glutamate to tRNA(Glu) in a two-step reaction: glutamate is first activated by ATP to form Glu-AMP and then transferred to the acceptor end of tRNA(Glu). This Thermobifida fusca (strain YX) protein is Glutamate--tRNA ligase.